We begin with the raw amino-acid sequence, 1052 residues long: RIMS-binding protein 2 (1052 aa).

Positions 115–164 (GEYIRPLPQPGDRPEPLSAKPTFLSRSGSARCRSESDMENERNSNTSKQR) are disordered. Basic and acidic residues predominate over residues 146–156 (CRSESDMENER). The 68-residue stretch at 167-234 (GKVHLCVARY…PSNFVDFVQD (68 aa)) folds into the SH3 1 domain. Fibronectin type-III domains lie at 297 to 390 (VPYP…GKDV), 393 to 475 (APSH…KKEA), and 489 to 590 (PPQD…VPPT). Disordered regions lie at residues 584–615 (ELLVPPTPHPRPAPQSKPLASSGVPETKDEHL), 629–666 (RAPGPVHGHMLEPPVGPGRRSPSPSRILPQPQGTPVST), 697–716 (SAGQYAASDEEDAYDSPDFK), 767–787 (EMQLEDGGRRRPSGTSHNALK), and 805–829 (FPRGSAGPQRSRPVTVPSIDDYGRD). A compositionally biased stretch (pro residues) spans 585 to 598 (LLVPPTPHPRPAPQ). Over residues 645-654 (PGRRSPSPSR) the composition is skewed to low complexity. 2 positions are modified to phosphoserine: Ser-704 and Ser-712. Residues Ser-832 and Ser-839 each carry the phosphoserine modification. A Phosphothreonine modification is found at Thr-841. 2 consecutive SH3 domains span residues 848 to 916 (LPAR…EIQA) and 952 to 1019 (VSTR…EVPD). Residues 1029-1052 (PSHYSQDTPMRSKAKRKKSVHFTP) are disordered. Positions 1040-1052 (SKAKRKKSVHFTP) are enriched in basic residues.

Belongs to the RIMBP family. In terms of assembly, interacts with RIMS1, RIMS2, CACNA1D and CACNA1B, and potentially with other Ca(2+) channel alpha-1 isoforms.

Its subcellular location is the cell membrane. The protein resides in the synapse. In terms of biological role, plays a role in the synaptic transmission as bifunctional linker that interacts simultaneously with RIMS1, RIMS2, CACNA1D and CACNA1B. This chain is RIMS-binding protein 2 (RIMBP2), found in Homo sapiens (Human).